A 1300-amino-acid polypeptide reads, in one-letter code: CRISPR-associated endonuclease Cas12a (1300 aa).

The interval 1–24 is wedge region 1; that stretch reads MSIYQEFVNKYSLSKTLRFELIPQ. 2 recognition domain regions span residues 25 to 339 and 340 to 591; these read GKTL…SFVI and DKLE…QKPY. 2 binds crRNA alone and in crRNA-target DNA heteroduplex regions span residues 47-51 and 182-186; these read YKKAK and FHENR. Residues 301–305 are binds DNA in crRNA-target DNA heteroduplex; the sequence is NEYIN. Binds crRNA in crRNA-target DNA heteroduplex regions lie at residues 326–329 and 538–541; these read KQIL and HKLK. The binds crRNA stretch occupies residues 591–595; that stretch reads YSDEK. Residues 592 to 662 are wedge region 2; that stretch reads SDEKFKLNFE…GYKKIVYKLL (71 aa). An LKL, important for PAM recognition and DNA unwinding region spans residues 662–679; it reads LPGANKMLPKVFFSAKSI. The PAM-interacting domain (PI) stretch occupies residues 663 to 762; that stretch reads PGANKMLPKV…FYREVENQGY (100 aa). Positions 671-677 are binds DNA protospacer adjacent motif (PAM) on target DNA; sequence KVFFSAK. The segment at 692 to 704 is binds single-strand non-target DNA; that stretch reads RNHSTHTKNGSPQ. The wedge region 3 stretch occupies residues 763-892; the sequence is KLTFENISES…PITINFKSSG (130 aa). Binds crRNA regions lie at residues 791 to 794 and 803 to 804; these read KDFS and LH. Active-site for pre-crRNA processing residues include His-843, Lys-852, and Lys-869. Binds crRNA stretches follow at residues 851–853 and 865–873; these read NKN and YDLIKDKRF. Residues 893–953 are ruvC-I; the sequence is ANKFNDEINL…IGNDRMKTNY (61 aa). The For DNase activity of RuvC domain role is filled by Asp-917. Positions 954–971 are bridge helix; the sequence is HDKLAAIEKDRDSARKDW. The ruvC-II stretch occupies residues 972–1078; that stretch reads KKINNIKEMK…KQTGIIYYVP (107 aa). The active-site For DNase activity of RuvC domain is Glu-1006. The nuclease domain stretch occupies residues 1079-1254; sequence AGFTSKICPV…QAPKNMPQDA (176 aa). Residue Asp-1255 is the For DNase activity of RuvC domain of the active site. The tract at residues 1255 to 1300 is ruvC-III; it reads DANGAYHIGLKGLMLLGRIKNNQEGKKLNLVIKNEEYFEFVQNRNN.

Belongs to the CRISPR-associated endonuclease Cas12a family. Might be a homodimer. Might be a monomer. It depends on Ca(2+) as a cofactor. Mg(2+) serves as cofactor.

The catalysed reaction is Endonucleolytic cleavage to 5'-phosphodinucleotide and 5'-phosphooligonucleotide end-products.. It catalyses the reaction RNA = a 5'-hydroxy-ribonucleotide + n nucleoside-2',3'-cyclophosphates.. In terms of biological role, CRISPR (clustered regularly interspaced short palindromic repeat), is an adaptive immune system that provides protection against mobile genetic elements (viruses, transposable elements and conjugative plasmids). CRISPR clusters contain sequences complementary to antecedent mobile elements and target invading nucleic acids. CRISPR clusters are transcribed and processed into CRISPR RNA (crRNA). Has endonuclease activity on pre-crRNA and dsDNA, using different active sites. A single-RNA guided endonuclease that is also capable of guiding crRNA processing; correct processing of pre-crRNA requires only this protein and the CRISPR locus. pre-crRNA processing proceeds by an intramolecular nucleophilic attack on the scissile phosphate by the 2'-OH of the upstream ribonucleotide, the divalent cation (which is bound by the crRNA) is probably required for ordering the crRNA pseudoknot and/or increasing RNA binding. RNA mutagenesis studies show pre-crRNA cleavage is highly sequence- and structure-specific. Forms a complex with crRNA and complementary dsDNA, where the crRNA displaces the non-target DNA strand and directs endonucleolytic cleavage of both strands of the DNA. Cleavage results in staggered 5-base 5' overhangs 14-18 and 21-23 bases downstream of the PAM (protospacer adjacent motif) on the non-target and target strands respectively. Both target and non-target strand DNA are probably independently cleaved in the same active site. When this protein is expressed in E.coli it prevents plasmids homologous to the first CRISPR spacer from transforming, formally showing it is responsible for plasmid immunity. This chain is CRISPR-associated endonuclease Cas12a, found in Francisella tularensis subsp. novicida (strain U112).